Here is a 65-residue protein sequence, read N- to C-terminus: VESP-VB1 (65 aa).

The signal sequence occupies residues 1 to 23 (MKMSILFLFALIASLACLQLTFA). AXPX repeat units lie at residues 23-26 (AAPA), 27-30 (ASPL), 31-34 (ANPG), 35-38 (ASPE), 39-42 (AAPL), 43-46 (ADPL), and 47-50 (ADPF). The propeptide occupies 24 to 49 (APAASPLANPGASPEAAPLADPLADP). Leucine 62 carries the post-translational modification Leucine amide.

As to expression, expressed by the venom gland.

It is found in the secreted. Its function is as follows. Antimicrobial peptide. Shows activity against both Gram-positive (S.aureus MIC=1.0-3.75 ug/ml) and -negative (E.coli MIC=7.5-15 ug/ml) bacteria, as well against fungi (C.albicans MIC=30 ug/ml). Also promotes important mast cell degranulation. Shows little hemolytic activity on rabbit and human erythrocytes. Its mast cell degranulation activity may be related to the activation of G-protein coupled receptors in mast cells as well as interaction with other proteins located in cell endosomal membranes in the mast cells. In Vespa bicolor (Black shield wasp), this protein is VESP-VB1.